A 356-amino-acid chain; its full sequence is MNNSSINEWPSLLQQLLDGQSLSSSQASNLMQGWLQEEIPPVLSGAILAALQAKGVSAQELAGMAKVLQSLSLTKEYHNNNIPITNFQYPIIDTCGTGGDGASTFNISTAVAFVLAAAGVPVAKHGNRSASGKVGSADVLEALGIRLNAPTEKVISALSEVGITFLFAPGWHPAMKCVVPLRRTLKVRTVFNLLGPLVNPLRPQAQIIGVYNSTLVKTVAQALGILGVEYAIALHGREKLDEAGLGDITDIAILSHGEVKATSINPQYLGLNYAPISTLQGGDVEQNAEILKNVLQGKGTSQQTDVVALNSSLALQVAGVVPLEAHQEGIGKAKDILQSGAAWLKLEQLVQFLSIF.

Residues Gly-96, 99-100 (GD), Thr-104, 106-109 (NIST), 124-132 (KHGNRSASG), and Ser-136 contribute to the 5-phospho-alpha-D-ribose 1-diphosphate site. Gly-96 serves as a coordination point for anthranilate. A Mg(2+)-binding site is contributed by Ser-108. Residue Asn-127 participates in anthranilate binding. Arg-182 serves as a coordination point for anthranilate. Mg(2+) contacts are provided by Asp-241 and Glu-242.

This sequence belongs to the anthranilate phosphoribosyltransferase family. As to quaternary structure, homodimer. Requires Mg(2+) as cofactor.

It catalyses the reaction N-(5-phospho-beta-D-ribosyl)anthranilate + diphosphate = 5-phospho-alpha-D-ribose 1-diphosphate + anthranilate. The protein operates within amino-acid biosynthesis; L-tryptophan biosynthesis; L-tryptophan from chorismate: step 2/5. Its function is as follows. Catalyzes the transfer of the phosphoribosyl group of 5-phosphorylribose-1-pyrophosphate (PRPP) to anthranilate to yield N-(5'-phosphoribosyl)-anthranilate (PRA). The polypeptide is Anthranilate phosphoribosyltransferase (Trichodesmium erythraeum (strain IMS101)).